We begin with the raw amino-acid sequence, 538 residues long: MYGGDDFGNTDFYDDYAHTGDPQLDMEYERTFYANRMPDNVKFFLMNFCQAIKEGNLYDIQNMYENTFPQISDHHFDKSAWPEEQEVGAIVDNDKVFLILYKELYYRHIHARIPGGPKLEQRINSFFNYCDFFNLIISSQNPVMLELPDIWLWELVDEFVYQFQNFAQYRARLTDKSQDEIQQLCVNHSNVWSILCILNVLHSLVDISNIKKQLEAISQGIDPQTVAGDFGKLGFYKMLGYFSLVGLLRVHSLLGDYYQAIKVLEPIEIHKKSAYSHIPACQISTSYYVGFAYMMMRRYADAIRTFSDILLYIQRTKQLYSTRSYQNDQINKQAEQMYHLLAICLVLHPQCIDESIQQVLREKNYHDAMFKMQCGDLEVFKSFFVFACPRFVSPCPPAADAPMEDYVKDPMEHQLLVFMDEVRQQKDLPTTRSYLKLYTTLPLTKLASFIDPNASEDDVSKLLIRLLCFKHKMRNLVWSKGPSGLEGTFKSGSELDFYIDDDMIHIADTKVSHRYGDFFVRKIMKFNDLNRKLKNINI.

Positions threonine 305 to histidine 513 constitute a PCI domain.

It belongs to the eIF-3 subunit L family. In terms of assembly, component of the eukaryotic translation initiation factor 3 (eIF-3) complex. The eIF-3 complex interacts with pix.

Its subcellular location is the cytoplasm. Functionally, component of the eukaryotic translation initiation factor 3 (eIF-3) complex, which is involved in protein synthesis of a specialized repertoire of mRNAs and, together with other initiation factors, stimulates binding of mRNA and methionyl-tRNAi to the 40S ribosome. The eIF-3 complex specifically targets and initiates translation of a subset of mRNAs involved in cell proliferation. This chain is Eukaryotic translation initiation factor 3 subunit L, found in Drosophila mojavensis (Fruit fly).